The following is a 430-amino-acid chain: Adenylosuccinate synthetase (430 aa).

GTP-binding positions include 13-19 (GDEGKGK) and 41-43 (GHT). The active-site Proton acceptor is Asp14. Mg(2+) is bound by residues Asp14 and Gly41. IMP contacts are provided by residues 14-17 (DEGK), 39-42 (NAGH), Thr130, Arg144, Gln225, Thr240, and Arg304. His42 serves as the catalytic Proton donor. A substrate-binding site is contributed by 300 to 306 (ASTGRPR). Residues Arg306, 332 to 334 (KLD), and 414 to 416 (STG) each bind GTP.

This sequence belongs to the adenylosuccinate synthetase family. Homodimer. Mg(2+) is required as a cofactor.

It is found in the cytoplasm. The catalysed reaction is IMP + L-aspartate + GTP = N(6)-(1,2-dicarboxyethyl)-AMP + GDP + phosphate + 2 H(+). Its pathway is purine metabolism; AMP biosynthesis via de novo pathway; AMP from IMP: step 1/2. In terms of biological role, plays an important role in the de novo pathway of purine nucleotide biosynthesis. Catalyzes the first committed step in the biosynthesis of AMP from IMP. The sequence is that of Adenylosuccinate synthetase from Xylella fastidiosa (strain M23).